A 181-amino-acid polypeptide reads, in one-letter code: ATP synthase subunit b 2 (181 aa).

Positions 1–12 are enriched in low complexity; sequence MAEGHGTTAHTG. The interval 1–20 is disordered; it reads MAEGHGTTAHTGAEGGHKAP. A helical transmembrane segment spans residues 33–53; the sequence is LVSLLIAFVALYLIVSKVALP.

This sequence belongs to the ATPase B chain family. F-type ATPases have 2 components, F(1) - the catalytic core - and F(0) - the membrane proton channel. F(1) has five subunits: alpha(3), beta(3), gamma(1), delta(1), epsilon(1). F(0) has three main subunits: a(1), b(2) and c(10-14). The alpha and beta chains form an alternating ring which encloses part of the gamma chain. F(1) is attached to F(0) by a central stalk formed by the gamma and epsilon chains, while a peripheral stalk is formed by the delta and b chains.

Its subcellular location is the cell inner membrane. Its function is as follows. F(1)F(0) ATP synthase produces ATP from ADP in the presence of a proton or sodium gradient. F-type ATPases consist of two structural domains, F(1) containing the extramembraneous catalytic core and F(0) containing the membrane proton channel, linked together by a central stalk and a peripheral stalk. During catalysis, ATP synthesis in the catalytic domain of F(1) is coupled via a rotary mechanism of the central stalk subunits to proton translocation. Functionally, component of the F(0) channel, it forms part of the peripheral stalk, linking F(1) to F(0). The b'-subunit is a diverged and duplicated form of b found in plants and photosynthetic bacteria. The chain is ATP synthase subunit b 2 (atpF2) from Rhodopseudomonas palustris (strain BisA53).